The sequence spans 440 residues: RNA polymerase II C-terminal domain phosphatase-like 4 (440 aa).

The span at 1-36 (MSVASDSPVHSSSSSDDLAAFLDAELDSASDASSGP) shows a compositional bias: low complexity. Residues 1–49 (MSVASDSPVHSSSSSDDLAAFLDAELDSASDASSGPSEEEEAEDDVESG) are disordered. Positions 37 to 47 (SEEEEAEDDVE) are enriched in acidic residues. Residues 118 to 292 (QRQRKLYLVL…DHRYKSLSEL (175 aa)) enclose the FCP1 homology domain. In terms of domain architecture, BRCT spans 337–429 (VRKEILKGCK…MKQPEENFGL (93 aa)).

Interacts with RAP74. It depends on Mg(2+) as a cofactor. Co(2+) is required as a cofactor. The cofactor is Mn(2+).

Its subcellular location is the nucleus. The enzyme catalyses O-phospho-L-seryl-[protein] + H2O = L-seryl-[protein] + phosphate. It carries out the reaction O-phospho-L-threonyl-[protein] + H2O = L-threonyl-[protein] + phosphate. Processively dephosphorylates 'Ser-2' and/or 'Ser-5' of the heptad repeats YSPTSPS in the C-terminal domain of the largest RNA polymerase II subunit (RPB1). This promotes the activity of RNA polymerase II. Required for normal plant growth. This chain is RNA polymerase II C-terminal domain phosphatase-like 4 (CPL4), found in Arabidopsis thaliana (Mouse-ear cress).